A 269-amino-acid chain; its full sequence is Tryptophan synthase alpha chain (269 aa).

Catalysis depends on proton acceptor residues E49 and D60.

It belongs to the TrpA family. As to quaternary structure, tetramer of two alpha and two beta chains.

It carries out the reaction (1S,2R)-1-C-(indol-3-yl)glycerol 3-phosphate + L-serine = D-glyceraldehyde 3-phosphate + L-tryptophan + H2O. Its pathway is amino-acid biosynthesis; L-tryptophan biosynthesis; L-tryptophan from chorismate: step 5/5. In terms of biological role, the alpha subunit is responsible for the aldol cleavage of indoleglycerol phosphate to indole and glyceraldehyde 3-phosphate. This Stutzerimonas stutzeri (strain A1501) (Pseudomonas stutzeri) protein is Tryptophan synthase alpha chain.